Reading from the N-terminus, the 204-residue chain is Prephenate decarboxylase (204 aa).

It belongs to the prephenate decarboxylase family.

The protein localises to the cytoplasm. It catalyses the reaction prephenate + H(+) = 3-[(4R)-4-hydroxycyclohexa-1,5-dien-1-yl]-2-oxopropanoate + CO2. It functions in the pathway antibiotic biosynthesis; bacilysin biosynthesis. Part of the bacABCDEF operon responsible for the biosynthesis of the nonribosomally synthesized dipeptide antibiotic bacilysin, composed of L-alanine and L-anticapsin. Bacilysin is an irreversible inactivator of the glutaminase domain of glucosamine synthetase. BacA is an unusual prephenate decarboxylase that avoids the typical aromatization of the cyclohexadienol ring of prephenate. BacA catalyzes the protonation of prephenate (1-carboxy-4-hydroxy-alpha-oxo-2,5-cyclohexadiene-1-propanoic acid) at C6 position, followed by a decarboxylation to produce the endocyclic-delta(4),delta(8)-7R-dihydro-hydroxyphenylpyruvate (en-H2HPP). En-H2HPP is able to undergo a slow nonenzymatic isomerization to produce the exocyclic-delta(3),delta(5)-dihydro-hydroxyphenylpyruvate (ex-H2HPP). BacA isomerizes only the pro-R double bond in prephenate. This is Prephenate decarboxylase from Bacillus subtilis.